A 141-amino-acid polypeptide reads, in one-letter code: Hemoglobin subunit alpha-A (141 aa).

Residues 1–141 (VLSGTDKTNV…VGAVLTAKYR (141 aa)) form the Globin domain. His58 is an O2 binding site. Residue His87 participates in heme b binding.

Belongs to the globin family. Heterotetramer of two alpha chains and two beta chains. As to expression, red blood cells.

In terms of biological role, involved in oxygen transport from the lung to the various peripheral tissues. This is Hemoglobin subunit alpha-A (HBAA) from Struthio camelus (Common ostrich).